A 500-amino-acid chain; its full sequence is Protein dcd1B (500 aa).

The signal sequence occupies residues 1–20 (MNLIKLFIICCLLISITVKS). N-linked (GlcNAc...) asparagine glycosylation is found at Asn284, Asn331, Asn441, Asn459, Asn474, and Asn475. The tract at residues 464–500 (FSEQPPLPPPNNSSSSDSNSNSNSDSSSSSDSNSNSN) is disordered. Residues 475 to 500 (NSSSSDSNSNSNSDSSSSSDSNSNSN) are compositionally biased toward low complexity.

The protein localises to the secreted. The protein is Protein dcd1B (dcd1B) of Dictyostelium discoideum (Social amoeba).